Consider the following 1040-residue polypeptide: DNA mismatch repair protein MutS (1040 aa).

The span at 1-10 shows a compositional bias: polar residues; sequence MPVKPSAQNN. 2 disordered regions span residues 1–22 and 130–157; these read MPVK…SVPV and ATGT…SKST. Residues 11 to 22 show a composition bias toward low complexity; the sequence is SPSKPTSKSVPV. The span at 130 to 143 shows a compositional bias: polar residues; that stretch reads ATGTDNANNPSNAP. 759 to 766 contacts ATP; the sequence is GPNMGGKS.

This sequence belongs to the DNA mismatch repair MutS family.

In terms of biological role, this protein is involved in the repair of mismatches in DNA. It is possible that it carries out the mismatch recognition step. This protein has a weak ATPase activity. This Psychrobacter cryohalolentis (strain ATCC BAA-1226 / DSM 17306 / VKM B-2378 / K5) protein is DNA mismatch repair protein MutS.